We begin with the raw amino-acid sequence, 301 residues long: Probable alpha-L-glutamate ligase (301 aa).

One can recognise an ATP-grasp domain in the interval 104–287; that stretch reads LQLLSRKGIG…VAGMIYEFIE (184 aa). ATP-binding positions include lysine 141, 178-179, aspartate 187, and 211-213; these read EF and RSN. Mg(2+) contacts are provided by aspartate 248, glutamate 260, and asparagine 262. 3 residues coordinate Mn(2+): aspartate 248, glutamate 260, and asparagine 262.

This sequence belongs to the RimK family. Mg(2+) serves as cofactor. The cofactor is Mn(2+).

In Vibrio vulnificus (strain CMCP6), this protein is Probable alpha-L-glutamate ligase.